Reading from the N-terminus, the 163-residue chain is IQ domain-containing protein F2 (163 aa).

IQ domains are found at residues 42–71 (RVIAAKKIQAWWRGTLVRRTLLHAALSTWI) and 98–127 (RERAVVKLQSLVRMWRIHWRYCQVLNAIYV).

The protein is IQ domain-containing protein F2 (IQCF2) of Bos taurus (Bovine).